Here is a 199-residue protein sequence, read N- to C-terminus: Oleosin 21.2 kDa (199 aa).

Residues methionine 1–phenylalanine 14 show a composition bias toward basic and acidic residues. The tract at residues methionine 1 to glycine 31 is disordered. An N-acetylalanine modification is found at alanine 2. Positions alanine 2–serine 56 are polar. The segment covering glycine 22–glycine 31 has biased composition (gly residues). 3 consecutive transmembrane segments (helical) span residues serine 51–alanine 71, glycine 72–phenylalanine 92, and isoleucine 96–phenylalanine 116. A hydrophobic region spans residues leucine 57–methionine 128. A disordered region spans residues lysine 159 to alanine 199. Residues glutamine 172–glutamine 193 show a composition bias toward basic and acidic residues.

It belongs to the oleosin family.

It localises to the lipid droplet. It is found in the membrane. Its function is as follows. May have a structural role to stabilize the lipid body during desiccation of the seed by preventing coalescence of the oil. Probably interacts with both lipid and phospholipid moieties of lipid bodies. May also provide recognition signals for specific lipase anchorage in lipolysis during seedling growth. The protein is Oleosin 21.2 kDa of Arabidopsis thaliana (Mouse-ear cress).